The chain runs to 181 residues: Adenine phosphoribosyltransferase (181 aa).

This sequence belongs to the purine/pyrimidine phosphoribosyltransferase family. As to quaternary structure, homodimer.

It localises to the cytoplasm. It carries out the reaction AMP + diphosphate = 5-phospho-alpha-D-ribose 1-diphosphate + adenine. It functions in the pathway purine metabolism; AMP biosynthesis via salvage pathway; AMP from adenine: step 1/1. In terms of biological role, catalyzes a salvage reaction resulting in the formation of AMP, that is energically less costly than de novo synthesis. This chain is Adenine phosphoribosyltransferase, found in Chelativorans sp. (strain BNC1).